The primary structure comprises 62 residues: Calmodulin regulator protein PCP4 (62 aa).

Residues 1 to 40 (MSERQGAGTTNGKDKPSGENDGQKKVQEEFDIDMDAPETE) are disordered. Residues 12 to 28 (GKDKPSGENDGQKKVQE) show a composition bias toward basic and acidic residues. Residues 28-40 (EEFDIDMDAPETE) are acidic; binds calcium and is required for modulating the calcium-binding kinetics of calmodulin. The region spanning 39–62 (TERAAVAIQSQFRKFQKKKAGSQS) is the IQ domain.

It belongs to the PCP4 family. As to quaternary structure, binds to both calcium-free and calcium-bound calmodulin. The affinity for the calcium-bound form is 50-fold greater.

In terms of biological role, functions as a modulator of calcium-binding by calmodulin. Thereby, regulates calmodulin activity and the different processes it controls. For instance, may play a role in neuronal differentiation through activation of calmodulin-dependent kinase signaling pathways. In Bos taurus (Bovine), this protein is Calmodulin regulator protein PCP4.